The following is a 1482-amino-acid chain: MQRSPLEKASVISKLFFSWTIPILKKGYRQRLELSDIYQISSADSADNLSEKLEREWDRELASKKNPKLINALQRCFFWRFTFYGILLYLGEVTKAIQPLLLGRIIASYDPDNKMERSIAIYLGIGLCLLFIMRTLLLHPAIFGLHHIGMQMRIALFSLIYKKTLKLSSRVLDKISIGQLVSLLSNNLNKFDEGLALAHFVWIAPLQVMLLMGLLWELLQASAFCGLAFLIVLALLQAGLGRMMMKYRDQRAGKINERLVITSEMIENIQSVKAYCWEEAMEKMIENLRQTELRLTRKAAYVRYVNSSAFFFSGFFVVFLSVLPYALIKGIILRKIFTTISFCIVLRMAVTRQFPWAVQTWYDSLGAINKIQEFLQKQEHKTLEYNLTTTEVVMENVTAFWEEGVGELFENAKQNNNSGNISSGDNRLFFSNFAILSTPVLRGINFKVERGQLLAVAGSTGAGKTSLLMMIMGELEPSEGKIKHSGRISFCSQFSWIMPGTIKENIIFGVSYDEYRYRSVIKACQLEEDISKFAEKDNIVLGEGGITLSGGQRARISLARAVYKDADLYLLDSPFGYLDVLTEKEIFERCVCKLMANKTRILVTSKMEHLKKADKILILHEGSSYFYGTFSELLNLRPDFSSKLMGYDSFDQFSAERRNSILTETLRRFSFEGDAAGPWNEPKKQSFKQTGEFGEKRKSSVLNPINAIKRFSIVQKTPLQMNGIEEDSEESSERRLSLVPDSEQGETILPRSNLINTGPTFQGRRRQSVLNLMTHSSVNQGQIVHRSTAASTRKMSLAPQENFTEMDIYSRRLSQDNGLEISEEINEEDLKECLFDDLESIPAVTTWNTYLRYITVHKNLIFVLIWCLVIFLAEVAASLVAFWLIEKTRPQDKGNSTRSTNNTSPVIITSTSAFYMFYIYVGVADSLLALGFLRGLPLVHTLITVSKILHQKMLHSVLHAPMSTLNTLKAGAILNRFSKDIAILDDLLPLTIFDFIQLVLIVIGAVVVVSILKPYIFLAAVPVIIAFVILRAYFLQTSQQLKQLESEGRSPIFTHLVTSLKGLWTLRAFGRQPYFETLFHKALNLHTATWFLYLSTLRWFQMRIEMIFVVFFVAVTFISILTTGEGEGTVGIILTLAMNIMSTLQWAVNSSIDVDSLMRSVSRVFKFIDMPAEESKYTKSVKPYKDGQLSKVMILENQHVKKDDIWPSGGQITVKDLTAKYIDGGNAILENISFSISPGQRVGLLGRTGSGKSTLLSALLRLLNTEGEIQVDGVSWESVTVQQWRRAFGVIPQKVFIFSGTFRKNLDPYGQWNDQEIWKVADEVGLRSVIEQFPGNLDFVLVDGGFVLSHGHKQLMCLARSVLSKAKILLLDEPSAHLDPITYQIIRRALKQAFADCTVILCEHRIEAMLECQRFLVIEENKVRQYDSMQKLLSEKSLFQQAISPSDRLKLFPQRSSSKHRSRAQITALKEEAEEEVQDTRL.

At 1–77 (MQRSPLEKAS…KLINALQRCF (77 aa)) the chain is on the cytoplasmic side. The helical transmembrane segment at 78–98 (FWRFTFYGILLYLGEVTKAIQ) threads the bilayer. Residues 81-365 (FTFYGILLYL…WAVQTWYDSL (285 aa)) enclose the ABC transmembrane type-1 1 domain. The Extracellular segment spans residues 99-122 (PLLLGRIIASYDPDNKMERSIAIY). A helical membrane pass occupies residues 123 to 146 (LGIGLCLLFIMRTLLLHPAIFGLH). Residues 147–195 (HIGMQMRIALFSLIYKKTLKLSSRVLDKISIGQLVSLLSNNLNKFDEGL) lie on the Cytoplasmic side of the membrane. A helical membrane pass occupies residues 196–216 (ALAHFVWIAPLQVMLLMGLLW). The Extracellular segment spans residues 217 to 222 (ELLQAS). Residues 223–243 (AFCGLAFLIVLALLQAGLGRM) form a helical membrane-spanning segment. The Cytoplasmic portion of the chain corresponds to 244–298 (MMKYRDQRAGKINERLVITSEMIENIQSVKAYCWEEAMEKMIENLRQTELRLTRK). The chain crosses the membrane as a helical span at residues 299–319 (AAYVRYVNSSAFFFSGFFVVF). Residues 320–339 (LSVLPYALIKGIILRKIFTT) lie on the Extracellular side of the membrane. The helical transmembrane segment at 340 to 358 (ISFCIVLRMAVTRQFPWAV) threads the bilayer. The Cytoplasmic segment spans residues 359-859 (QTWYDSLGAI…YLRYITVHKN (501 aa)). ATP contacts are provided by residues Trp-401, 458–465 (GSTGAGKT), and Gln-493. An ABC transporter 1 domain is found at 423-646 (SGDNRLFFSN…RPDFSSKLMG (224 aa)). Residue Cys-524 is the site of S-palmitoyl cysteine attachment. Phosphoserine is present on residues Ser-549 and Ser-660. Positions 654–832 (SAERRNSILT…EEINEEDLKE (179 aa)) are disordered R region. At Ser-670 the chain carries Phosphoserine; by PKA. Ser-686 is subject to Phosphoserine. Lys-688 is covalently cross-linked (Glycyl lysine isopeptide (Lys-Gly) (interchain with G-Cter in ubiquitin)). 2 positions are modified to phosphoserine: Ser-700 and Ser-712. Thr-717 carries the post-translational modification Phosphothreonine. 5 positions are modified to phosphoserine: Ser-737, Ser-768, Ser-791, Ser-796, and Ser-814. Residues 860-880 (LIFVLIWCLVIFLAEVAASLV) form a helical membrane-spanning segment. Residues 860–1156 (LIFVLIWCLV…AVNSSIDVDS (297 aa)) enclose the ABC transmembrane type-1 2 domain. Residues 881–919 (AFWLIEKTRPQDKGNSTRSTNNTSPVIITSTSAFYMFYI) are Extracellular-facing. N-linked (GlcNAc...) asparagine glycosylation is found at Asn-895 and Asn-901. Residues 920 to 940 (YVGVADSLLALGFLRGLPLVH) traverse the membrane as a discontinuously helical segment. Residues 941–991 (TLITVSKILHQKMLHSVLHAPMSTLNTLKAGAILNRFSKDIAILDDLLPLT) are Cytoplasmic-facing. The helical transmembrane segment at 992–1012 (IFDFIQLVLIVIGAVVVVSIL) threads the bilayer. At 1013–1014 (KP) the chain is on the extracellular side. The chain crosses the membrane as a helical span at residues 1015–1035 (YIFLAAVPVIIAFVILRAYFL). Residues 1036-1096 (QTSQQLKQLE…TATWFLYLST (61 aa)) lie on the Cytoplasmic side of the membrane. Residues 1097–1117 (LRWFQMRIEMIFVVFFVAVTF) form a helical membrane-spanning segment. Residues 1118–1131 (ISILTTGEGEGTVG) are Extracellular-facing. A helical membrane pass occupies residues 1132–1152 (IILTLAMNIMSTLQWAVNSSI). The Cytoplasmic portion of the chain corresponds to 1153-1482 (DVDSLMRSVS…AEEEVQDTRL (330 aa)). Residues 1212-1445 (ITVKDLTAKY…KSLFQQAISP (234 aa)) enclose the ABC transporter 2 domain. ATP is bound by residues Tyr-1221 and 1246 to 1253 (GRTGSGKS). An interaction with GORASP2 region spans residues 1388–1482 (RALKQAFADC…AEEEVQDTRL (95 aa)). Residue Cys-1397 is the site of S-palmitoyl cysteine attachment. A phosphoserine mark is found at Ser-1446 and Ser-1458. A disordered region spans residues 1454–1482 (QRSSSKHRSRAQITALKEEAEEEVQDTRL). The segment covering 1472–1482 (EAEEEVQDTRL) has biased composition (acidic residues). The PDZ-binding motif lies at 1480–1482 (TRL).

This sequence belongs to the ABC transporter superfamily. ABCC family. CFTR transporter (TC 3.A.1.202) subfamily. As to quaternary structure, monomer; does not require oligomerization for channel activity. May form oligomers in the membrane. Interacts with SLC26A3, SLC26A6 and NHERF1. Interacts with SHANK2. Interacts with MYO6. Interacts (via C-terminus) with GOPC (via PDZ domain); this promotes CFTR internalization and thereby decreases channel activity. Interacts with SLC4A7 through NHERF1. Found in a complex with MYO5B and RAB11A. Interacts with ANO1. Interacts with SLC26A8. Interacts with AHCYL1; the interaction increases CFTR activity. Interacts with CSE1L. The core-glycosylated form interacts with GORASP2 (via PDZ GRASP-type 1 domain) in respone to ER stress. Interacts with MARCHF2; the interaction leads to CFTR ubiqtuitination and degradation. Interacts with ADGRG2. Post-translationally, N-glycosylated. Phosphorylated; cAMP treatment promotes phosphorylation and activates the channel. Dephosphorylation decreases the ATPase activity (in vitro). Phosphorylation at PKA sites activates the channel. Phosphorylation at PKC sites enhances the response to phosphorylation by PKA. Phosphorylated by AMPK; this inhibits channel activity. In terms of processing, ubiquitinated, leading to its degradation in the lysosome. Deubiquitination by USP10 in early endosomes enhances its endocytic recycling to the cell membrane. Ubiquitinated by RNF185 during ER stress. Ubiquitinated by MARCHF2.

The protein localises to the apical cell membrane. It is found in the early endosome membrane. The protein resides in the cell membrane. It localises to the recycling endosome membrane. Its subcellular location is the endoplasmic reticulum membrane. The protein localises to the nucleus. It carries out the reaction ATP + H2O + closed Cl(-) channel = ADP + phosphate + open Cl(-) channel.. The catalysed reaction is chloride(in) = chloride(out). It catalyses the reaction hydrogencarbonate(in) = hydrogencarbonate(out). The enzyme catalyses ATP + H2O = ADP + phosphate + H(+). Its function is as follows. Epithelial ion channel that plays an important role in the regulation of epithelial ion and water transport and fluid homeostasis. Mediates the transport of chloride ions across the cell membrane. Possesses an intrinsic ATPase activity and utilizes ATP to gate its channel; the passive flow of anions through the channel is gated by cycles of ATP binding and hydrolysis by the ATP-binding domains. The ion channel is also permeable to HCO(3)(-); selectivity depends on the extracellular chloride concentration. Exerts its function also by modulating the activity of other ion channels and transporters. Contributes to the regulation of the pH and the ion content of the epithelial fluid layer. Modulates the activity of the epithelial sodium channel (ENaC) complex, in part by regulating the cell surface expression of the ENaC complex. May regulate bicarbonate secretion and salvage in epithelial cells by regulating the transporter SLC4A7. Can inhibit the chloride channel activity of ANO1. Plays a role in the chloride and bicarbonate homeostasis during sperm epididymal maturation and capacitation. This chain is Cystic fibrosis transmembrane conductance regulator, found in Rhinolophus ferrumequinum (Greater horseshoe bat).